Here is a 627-residue protein sequence, read N- to C-terminus: UvrABC system protein C (627 aa).

The region spanning 22–100 (NNPGVYRMFN…IKRLRPRFNV (79 aa)) is the GIY-YIG domain. The UVR domain maps to 210-245 (QSVKDHLAAAMQAASADLDFEHAAVYRDRLAALSHV).

This sequence belongs to the UvrC family. As to quaternary structure, interacts with UvrB in an incision complex.

It localises to the cytoplasm. Functionally, the UvrABC repair system catalyzes the recognition and processing of DNA lesions. UvrC both incises the 5' and 3' sides of the lesion. The N-terminal half is responsible for the 3' incision and the C-terminal half is responsible for the 5' incision. The chain is UvrABC system protein C from Brucella abortus biovar 1 (strain 9-941).